We begin with the raw amino-acid sequence, 456 residues long: MRYLPLTDADRSAMLARIGAASIDDLFVDVPEAARLAGPIAGLPAHASELAVERHMSRLARRNLSAGEAPFFLGCGAYRHHVPASVDHLIQRGEFLTSYTPYQPEIAQGTLQALFEFQTQVARLFGCDVANASMYDGSTACWEAITMARRVTKRDKAILSAGLHPHYVSLAKTMARFTGDRLDAAIPDLTPGAPGDDMARLLAAIDGETSCVVVQNPNILGHVADLSELAARCHEKGALLVAVVTEPVALGAIRSPGEMGADIVVGEGQSIGVGLNFGGPYVGLFACAEKHVRQMPGRLAGVTADADGQRGFVLTLSTREQHIRREKATSNICTNAGLCALAFSVHLTLLGETGLRRLAELNHAGAVAAAERLAQVPGVELVNGAFFNEFTLKLPREARPVVRSLADKGILGGVSLGRLYPGEAALAGGLVVAVTETASAEDVETLAQALEAEIAA.

The protein belongs to the GcvP family. N-terminal subunit subfamily. In terms of assembly, the glycine cleavage system is composed of four proteins: P, T, L and H. In this organism, the P 'protein' is a heterodimer of two subunits.

The catalysed reaction is N(6)-[(R)-lipoyl]-L-lysyl-[glycine-cleavage complex H protein] + glycine + H(+) = N(6)-[(R)-S(8)-aminomethyldihydrolipoyl]-L-lysyl-[glycine-cleavage complex H protein] + CO2. The glycine cleavage system catalyzes the degradation of glycine. The P protein binds the alpha-amino group of glycine through its pyridoxal phosphate cofactor; CO(2) is released and the remaining methylamine moiety is then transferred to the lipoamide cofactor of the H protein. In Rhizorhabdus wittichii (strain DSM 6014 / CCUG 31198 / JCM 15750 / NBRC 105917 / EY 4224 / RW1) (Sphingomonas wittichii), this protein is Probable glycine dehydrogenase (decarboxylating) subunit 1.